The following is a 239-amino-acid chain: UPF0173 metal-dependent hydrolase Dvul_0081 (239 aa).

This sequence belongs to the UPF0173 family.

The polypeptide is UPF0173 metal-dependent hydrolase Dvul_0081 (Nitratidesulfovibrio vulgaris (strain DP4) (Desulfovibrio vulgaris)).